The primary structure comprises 265 residues: Synaptoporin (265 aa).

Residues 1-4 lie on the Cytoplasmic side of the membrane; the sequence is MCMV. The 202-residue stretch at 1–202 folds into the MARVEL domain; the sequence is MCMVIFAPLF…NIWFVFKETG (202 aa). The helical transmembrane segment at 5–25 threads the bilayer; it reads IFAPLFAMFAFATCGGYSGGL. Topologically, residues 26–81 are vesicular; that stretch reads RLSVDCVNKTESNLSIDIAFAYPFRLQQVTFEVPTCEGKEQQKLALVGDSSSSAEF. N-linked (GlcNAc...) asparagine glycans are attached at residues N33 and N38. Residues 82–102 form a helical membrane-spanning segment; that stretch reads FVTVAVFAFLYSLAATVVYIF. Over 103-114 the chain is Cytoplasmic; sequence FQNKYRENNRGP. A helical membrane pass occupies residues 115–135; the sequence is LIDFIVTVVFSFLWLVGSSAW. The Vesicular segment spans residues 136–177; sequence AKGLSDVKVATDPKEVLLLMSACKQPSNKCMAVHSPVMSSLN. A helical transmembrane segment spans residues 178–198; sequence TSVVFGFLNFILWAGNIWFVF. Residues 199–265 are Cytoplasmic-facing; sequence KETGWHSSGQ…SGPTSFNNQI (67 aa). A run of 5 repeats spans residues 210 to 214, 222 to 226, 227 to 231, 232 to 236, and 238 to 242. Residues 210–242 are 5 X approximate repeats; that stretch reads YLSDPMEKHSSSYNQGRYNQESYGSSGGYSQQA. S212 is subject to Phosphoserine. Polar residues predominate over residues 221 to 230; sequence SYNQGRYNQE. The disordered stretch occupies residues 221–265; sequence SYNQGRYNQESYGSSGGYSQQANLGPTSDEFGQQPSGPTSFNNQI. Over residues 240–265 the composition is skewed to polar residues; that stretch reads QQANLGPTSDEFGQQPSGPTSFNNQI.

It belongs to the synaptophysin/synaptobrevin family.

The protein resides in the cytoplasmic vesicle. Its subcellular location is the secretory vesicle. It localises to the synaptic vesicle membrane. The protein localises to the synapse. It is found in the synaptosome. Its function is as follows. Intrinsic membrane protein of small synaptic vesicles. Probable vesicular channel protein. The sequence is that of Synaptoporin (Synpr) from Mus musculus (Mouse).